The following is a 1806-amino-acid chain: Collagen alpha-1(XI) chain (1806 aa).

The first 35 residues, 1 to 35 (MEPWSSRWKTKRWLWDFTVTTLALTFLFQAREVRG), serve as a signal peptide directing secretion. Residues 36 to 511 (AAPVDVLKAL…DGSKGPTISA (476 aa)) constitute a propeptide, N-terminal propeptide. 2 cysteine pairs are disulfide-bonded: C61–C243 and C182–C236. Residues 71 to 243 (DTAYRVSKQA…DYCEHYSPDC (173 aa)) enclose the Laminin G-like domain. Residues 230 to 419 (KAAYDYCEHY…DITETSINGH (190 aa)) form a nonhelical region region. The interval 420 to 508 (GAYGEKGQKG…YGGDGSKGPT (89 aa)) is triple-helical region (interrupted). A disordered region spans residues 439–508 (LVEGPPGPAG…YGGDGSKGPT (70 aa)). A Collagen-like 1 domain is found at 442–490 (GPPGPAGPAGIMGPPGLQGPTGPPGDPGDRGPPGRPGLPGADGLPGPPG). Composition is skewed to low complexity over residues 449–461 (PAGI…LQGP) and 479–496 (LPGA…LMLP). The short nonhelical segment stretch occupies residues 509–511 (ISA). The interval 512–528 (QEAQAQAILQQARIALR) is telopeptide. Residues 528-1563 (RGPPGPMGLT…TRRHTEGMQA (1036 aa)) form a disordered region. Residues 529 to 1542 (GPPGPMGLTG…PGSPGPPGEV (1014 aa)) are triple-helical region. Collagen-like domains follow at residues 532-586 (GPMG…GADG), 583-641 (GADG…EIGP), 616-674 (GERG…VDGP), and 643-699 (GLPG…PGPQ). Gly residues-rich tracts occupy residues 541-550 (GPVGGPGSSG) and 583-592 (GADGGRGMPG). K612 carries the post-translational modification Allysine. Residues 641–662 (PRGLPGEAGPRGLLGPRGTPGA) show a composition bias toward low complexity. Residues 699 to 710 (QGLPGPQGPIGP) show a composition bias toward pro residues. The segment covering 717–728 (QGKPGLAGLPGA) has biased composition (low complexity). Residues 807–816 (RGEDGPEGPK) are compositionally biased toward basic and acidic residues. Low complexity-rich tracts occupy residues 875–903 (KPGP…PGPK), 918–927 (RGPQGPQGPV), 941–960 (KDGL…QGKT), 971–981 (PQGPTGETGPI), 1032–1041 (RGLPGAQGAP), and 1058–1074 (SPGE…IGLP). The segment covering 1076-1085 (RPGPQGPPGP) has biased composition (pro residues). The span at 1086–1110 (AGEKGAPGEKGPQGPAGRDGVQGPV) shows a compositional bias: low complexity. A compositionally biased stretch (gly residues) spans 1162 to 1171 (GIAGGDGEPG). Composition is skewed to pro residues over residues 1218-1229 (MGPPGPPGPRGP) and 1343-1362 (QPGP…PGKR). Composition is skewed to low complexity over residues 1385-1394 (AEGPPGKTGP) and 1419-1428 (QGLPGAAGQD). Collagen-like domains follow at residues 1393-1450 (GPVG…GSKG), 1429-1487 (GPPG…AKGD), and 1483-1541 (GAKG…PPGE). Residues 1430–1439 (PPGPMGPPGL) show a composition bias toward pro residues. K1452 carries the allysine modification. The span at 1455 to 1464 (PGLIGLIGPP) shows a compositional bias: low complexity. Over residues 1483–1492 (GAKGDGGIPG) the composition is skewed to gly residues. Composition is skewed to pro residues over residues 1493–1509 (PAGP…PGPQ) and 1530–1539 (PGPPGSPGPP). The interval 1543-1563 (IQPLPILSSKKTRRHTEGMQA) is nonhelical region (C-terminal). A propeptide spans 1564 to 1806 (DADDNILDYS…FEVGPVCFLG (243 aa)) (C-terminal propeptide). One can recognise a Fibrillar collagen NC1 domain in the interval 1577 to 1805 (EEIFGSLNSL…GFEVGPVCFL (229 aa)). C1607 and C1639 form a disulfide bridge. Ca(2+) is bound by residues D1625, N1627, Q1628, C1630, and D1633. Residue N1640 is glycosylated (N-linked (GlcNAc...) asparagine). Cystine bridges form between C1648–C1803 and C1714–C1757.

Belongs to the fibrillar collagen family. As to quaternary structure, trimers composed of three different chains: alpha 1(XI), alpha 2(XI), and alpha 3(XI). Alpha 3(XI) is a post-translational modification of alpha 1(II). Alpha 1(V) can also be found instead of alpha 3(XI)=1(II). Post-translationally, prolines at the third position of the tripeptide repeating unit (G-X-Y) are hydroxylated in some or all of the chains. N-glycosylated. As to expression, cartilage, placenta and some tumor or virally transformed cell lines. Isoforms using exon IIA or IIB are found in the cartilage while isoforms using only exon IIB are found in the tendon.

The protein localises to the secreted. It is found in the extracellular space. The protein resides in the extracellular matrix. Its function is as follows. May play an important role in fibrillogenesis by controlling lateral growth of collagen II fibrils. The sequence is that of Collagen alpha-1(XI) chain (COL11A1) from Homo sapiens (Human).